Consider the following 627-residue polypeptide: Protein zyg-11 homolog A (627 aa).

LRR repeat units lie at residues 123-146, 203-227, and 409-432; these read LPNLGSLDISNTLVTNISALLSCK, LPNLTSLDISGGTDVTDQAVESFLQ, and ITSILALKLSPEEMGQLQEELIMA.

The protein belongs to the zyg-11 family.

In terms of biological role, probably acts as a target recruitment subunit in an E3 ubiquitin ligase complex ZYGA-CUL2-elongin BC. The sequence is that of Protein zyg-11 homolog A (Zyg11a) from Mus musculus (Mouse).